Here is a 270-residue protein sequence, read N- to C-terminus: Small ribosomal subunit protein eS1 (270 aa).

2 disordered regions span residues 1–21 (MAVG…KKKV) and 238–270 (GGGK…QESV).

Belongs to the eukaryotic ribosomal protein eS1 family. As to quaternary structure, component of the small ribosomal subunit. Mature ribosomes consist of a small (40S) and a large (60S) subunit. The 40S subunit contains about 33 different proteins and 1 molecule of RNA (18S). The 60S subunit contains about 49 different proteins and 3 molecules of RNA (28S, 5.8S and 5S).

It localises to the cytoplasm. This Aedes aegypti (Yellowfever mosquito) protein is Small ribosomal subunit protein eS1.